Reading from the N-terminus, the 544-residue chain is Tyrosyl-DNA phosphodiesterase 1 (544 aa).

His182 acts as the Nucleophile in catalysis. Lys184 contacts substrate. Residues Ser312–Ser316 form an interaction with DNA region. His432 acts as the Proton donor/acceptor in catalysis. Lys434 contributes to the substrate binding site.

The protein belongs to the tyrosyl-DNA phosphodiesterase family.

The protein resides in the nucleus. Functionally, DNA repair enzyme that can remove a variety of covalent adducts from DNA through hydrolysis of a 3'-phosphodiester bond, giving rise to DNA with a free 3' phosphate. Catalyzes the hydrolysis of dead-end complexes between DNA and the topoisomerase I active site tyrosine residue. Hydrolyzes 3'-phosphoglycolates on protruding 3' ends on DNA double-strand breaks due to DNA damage by radiation and free radicals. Also cleaves 5' phosphotyrosyl adducts resulting from dead-end complexes between DNA and the active site tyrosine of topoisomerase II. Contributes to DNA repair after radiation damage. Acts on blunt-ended double-strand DNA breaks and on single-stranded DNA. May have low 3'exonuclease activity and may be able to remove a single nucleoside from the 3'end of DNA and RNA molecules with 3'hydroxyl groups. Has no exonuclease activity towards DNA or RNA with a 3'phosphate. The protein is Tyrosyl-DNA phosphodiesterase 1 (TDP1) of Saccharomyces cerevisiae (strain ATCC 204508 / S288c) (Baker's yeast).